Here is a 98-residue protein sequence, read N- to C-terminus: Cystatin-B (98 aa).

M1 carries the N-acetylmethionine modification. A Secondary area of contact motif is present at residues 46–50 (QVVAG).

It belongs to the cystatin family. As to quaternary structure, able to form dimers stabilized by noncovalent forces.

It is found in the cytoplasm. The protein localises to the nucleus. Functionally, this is an intracellular thiol proteinase inhibitor. Tightly binding reversible inhibitor of cathepsins L, H and B. This chain is Cystatin-B (CSTB), found in Macaca fuscata fuscata (Japanese macaque).